A 187-amino-acid polypeptide reads, in one-letter code: Potassium-transporting ATPase KdpC subunit (187 aa).

Residues 11–31 form a helical membrane-spanning segment; the sequence is LILLMTVVTGALYPLAVTGIA.

The protein belongs to the KdpC family. In terms of assembly, the system is composed of three essential subunits: KdpA, KdpB and KdpC.

The protein localises to the cell inner membrane. In terms of biological role, part of the high-affinity ATP-driven potassium transport (or Kdp) system, which catalyzes the hydrolysis of ATP coupled with the electrogenic transport of potassium into the cytoplasm. This subunit acts as a catalytic chaperone that increases the ATP-binding affinity of the ATP-hydrolyzing subunit KdpB by the formation of a transient KdpB/KdpC/ATP ternary complex. This Pseudomonas entomophila (strain L48) protein is Potassium-transporting ATPase KdpC subunit.